The primary structure comprises 446 residues: DNA repair protein RadA (446 aa).

The C4-type zinc finger occupies 10–27 (CSNCGNTSPKWSGQCFDC). An ATP-binding site is contributed by 91-98 (GDPGIGKS). The RadA KNRFG motif motif lies at 250 to 254 (KNRFG). A lon-protease-like region spans residues 349-446 (EVYLSIAGGL…HLKDLKEIIR (98 aa)).

It belongs to the RecA family. RadA subfamily.

Functionally, DNA-dependent ATPase involved in processing of recombination intermediates, plays a role in repairing DNA breaks. Stimulates the branch migration of RecA-mediated strand transfer reactions, allowing the 3' invading strand to extend heteroduplex DNA faster. Binds ssDNA in the presence of ADP but not other nucleotides, has ATPase activity that is stimulated by ssDNA and various branched DNA structures, but inhibited by SSB. Does not have RecA's homology-searching function. This chain is DNA repair protein RadA, found in Rickettsia felis (strain ATCC VR-1525 / URRWXCal2) (Rickettsia azadi).